We begin with the raw amino-acid sequence, 143 residues long: Peptide methionine sulfoxide reductase MsrB (143 aa).

Residues 16-139 (DAELRRRLTP…NSAALNFEAK (124 aa)) enclose the MsrB domain. Residues C55, C58, C104, and C107 each coordinate Zn(2+). The active-site Nucleophile is the C128.

It belongs to the MsrB Met sulfoxide reductase family. The cofactor is Zn(2+).

The enzyme catalyses L-methionyl-[protein] + [thioredoxin]-disulfide + H2O = L-methionyl-(R)-S-oxide-[protein] + [thioredoxin]-dithiol. The sequence is that of Peptide methionine sulfoxide reductase MsrB from Burkholderia mallei (strain NCTC 10229).